A 123-amino-acid polypeptide reads, in one-letter code: Small ribosomal subunit protein uS12 (123 aa).

Asp89 bears the 3-methylthioaspartic acid mark.

It belongs to the universal ribosomal protein uS12 family. As to quaternary structure, part of the 30S ribosomal subunit. Contacts proteins S8 and S17. May interact with IF1 in the 30S initiation complex.

With S4 and S5 plays an important role in translational accuracy. Functionally, interacts with and stabilizes bases of the 16S rRNA that are involved in tRNA selection in the A site and with the mRNA backbone. Located at the interface of the 30S and 50S subunits, it traverses the body of the 30S subunit contacting proteins on the other side and probably holding the rRNA structure together. The combined cluster of proteins S8, S12 and S17 appears to hold together the shoulder and platform of the 30S subunit. The protein is Small ribosomal subunit protein uS12 of Granulibacter bethesdensis (strain ATCC BAA-1260 / CGDNIH1).